A 403-amino-acid polypeptide reads, in one-letter code: Phosphopentomutase (403 aa).

The Mn(2+) site is built by D13, D298, H303, D339, H340, and H351.

The protein belongs to the phosphopentomutase family. Mn(2+) is required as a cofactor.

Its subcellular location is the cytoplasm. The enzyme catalyses 2-deoxy-alpha-D-ribose 1-phosphate = 2-deoxy-D-ribose 5-phosphate. The catalysed reaction is alpha-D-ribose 1-phosphate = D-ribose 5-phosphate. It participates in carbohydrate degradation; 2-deoxy-D-ribose 1-phosphate degradation; D-glyceraldehyde 3-phosphate and acetaldehyde from 2-deoxy-alpha-D-ribose 1-phosphate: step 1/2. Isomerase that catalyzes the conversion of deoxy-ribose 1-phosphate (dRib-1-P) and ribose 1-phosphate (Rib-1-P) to deoxy-ribose 5-phosphate (dRib-5-P) and ribose 5-phosphate (Rib-5-P), respectively. The polypeptide is Phosphopentomutase (Streptococcus pyogenes serotype M3 (strain ATCC BAA-595 / MGAS315)).